The primary structure comprises 484 residues: Aspartyl/glutamyl-tRNA(Asn/Gln) amidotransferase subunit B (484 aa).

Belongs to the GatB/GatE family. GatB subfamily. In terms of assembly, heterotrimer of A, B and C subunits.

It carries out the reaction L-glutamyl-tRNA(Gln) + L-glutamine + ATP + H2O = L-glutaminyl-tRNA(Gln) + L-glutamate + ADP + phosphate + H(+). It catalyses the reaction L-aspartyl-tRNA(Asn) + L-glutamine + ATP + H2O = L-asparaginyl-tRNA(Asn) + L-glutamate + ADP + phosphate + 2 H(+). Its function is as follows. Allows the formation of correctly charged Asn-tRNA(Asn) or Gln-tRNA(Gln) through the transamidation of misacylated Asp-tRNA(Asn) or Glu-tRNA(Gln) in organisms which lack either or both of asparaginyl-tRNA or glutaminyl-tRNA synthetases. The reaction takes place in the presence of glutamine and ATP through an activated phospho-Asp-tRNA(Asn) or phospho-Glu-tRNA(Gln). The protein is Aspartyl/glutamyl-tRNA(Asn/Gln) amidotransferase subunit B of Bordetella bronchiseptica (strain ATCC BAA-588 / NCTC 13252 / RB50) (Alcaligenes bronchisepticus).